The primary structure comprises 339 residues: GTPase Obg (339 aa).

The 158-residue stretch at 1-158 (MKFLDQVDLR…RDLTFELKLM (158 aa)) folds into the Obg domain. Disordered stretches follow at residues 66–86 (FAED…GEDK) and 125–148 (GNAF…PGEE). Residues 72–86 (PGGRREQTGASGEDK) show a composition bias toward basic and acidic residues. Residues 129 to 138 (FKSSTNQAPR) are compositionally biased toward polar residues. Residues 159–329 (ADVGLVGFPN…LKYTLFDTVH (171 aa)) enclose the OBG-type G domain. GTP-binding positions include 165-172 (GFPNAGKS), 190-194 (FTTLT), 212-215 (DIPG), 279-282 (SKID), and 310-312 (SAV). Mg(2+) is bound by residues S172 and T192.

The protein belongs to the TRAFAC class OBG-HflX-like GTPase superfamily. OBG GTPase family. Monomer. The cofactor is Mg(2+).

It localises to the cytoplasm. Its function is as follows. An essential GTPase which binds GTP, GDP and possibly (p)ppGpp with moderate affinity, with high nucleotide exchange rates and a fairly low GTP hydrolysis rate. Plays a role in control of the cell cycle, stress response, ribosome biogenesis and in those bacteria that undergo differentiation, in morphogenesis control. The polypeptide is GTPase Obg (Salinibacter ruber (strain DSM 13855 / M31)).